Consider the following 251-residue polypeptide: Probable caffeoyl-CoA O-methyltransferase 3 (251 aa).

S-adenosyl-L-methionine-binding positions include T61, D83, 85-86 (GV), S91, D109, and A138. Residue D160 coordinates a divalent metal cation. S-adenosyl-L-methionine is bound at residue D162. A divalent metal cation-binding residues include D186 and N187.

Belongs to the class I-like SAM-binding methyltransferase superfamily. Cation-dependent O-methyltransferase family. CCoAMT subfamily.

It catalyses the reaction (E)-caffeoyl-CoA + S-adenosyl-L-methionine = (E)-feruloyl-CoA + S-adenosyl-L-homocysteine + H(+). The protein is Probable caffeoyl-CoA O-methyltransferase 3 (omt1) of Dictyostelium discoideum (Social amoeba).